Reading from the N-terminus, the 239-residue chain is DnaA regulatory inactivator Hda (239 aa).

The protein belongs to the DnaA family. HdA subfamily. The active form seems to be an ADP-bound monomer. Forms the RIDA complex (regulatory inactivation of DnaA) of ATP-DnaA, ADP-Hda and the DNA-loaded beta sliding clamp (dnaN).

Functionally, mediates the interaction of DNA replication initiator protein DnaA with DNA polymerase subunit beta sliding clamp (dnaN). Stimulates hydrolysis of ATP-DnaA to ADP-DnaA, rendering DnaA inactive for reinitiation, a process called regulatory inhibition of DnaA or RIDA. This chain is DnaA regulatory inactivator Hda, found in Yersinia enterocolitica serotype O:8 / biotype 1B (strain NCTC 13174 / 8081).